The chain runs to 216 residues: 3-isopropylmalate dehydratase small subunit (216 aa).

This sequence belongs to the LeuD family. LeuD type 1 subfamily. As to quaternary structure, heterodimer of LeuC and LeuD.

It catalyses the reaction (2R,3S)-3-isopropylmalate = (2S)-2-isopropylmalate. It participates in amino-acid biosynthesis; L-leucine biosynthesis; L-leucine from 3-methyl-2-oxobutanoate: step 2/4. Its function is as follows. Catalyzes the isomerization between 2-isopropylmalate and 3-isopropylmalate, via the formation of 2-isopropylmaleate. This is 3-isopropylmalate dehydratase small subunit from Acinetobacter baylyi (strain ATCC 33305 / BD413 / ADP1).